A 149-amino-acid polypeptide reads, in one-letter code: Large ribosomal subunit protein bL9 (149 aa).

The protein belongs to the bacterial ribosomal protein bL9 family.

In terms of biological role, binds to the 23S rRNA. In Aquifex aeolicus (strain VF5), this protein is Large ribosomal subunit protein bL9.